Reading from the N-terminus, the 294-residue chain is Acetyl-coenzyme A carboxylase carboxyl transferase subunit beta (294 aa).

One can recognise a CoA carboxyltransferase N-terminal domain in the interval 30-294 (IMTKCPECKK…PEAGGESDGE (265 aa)). Cys-34, Cys-37, Cys-53, and Cys-56 together coordinate Zn(2+). The C4-type zinc finger occupies 34-56 (CPECKKIMYTKELQKNLMVCNYC).

This sequence belongs to the AccD/PCCB family. As to quaternary structure, acetyl-CoA carboxylase is a heterohexamer composed of biotin carboxyl carrier protein (AccB), biotin carboxylase (AccC) and two subunits each of ACCase subunit alpha (AccA) and ACCase subunit beta (AccD). Requires Zn(2+) as cofactor.

It is found in the cytoplasm. The catalysed reaction is N(6)-carboxybiotinyl-L-lysyl-[protein] + acetyl-CoA = N(6)-biotinyl-L-lysyl-[protein] + malonyl-CoA. Its pathway is lipid metabolism; malonyl-CoA biosynthesis; malonyl-CoA from acetyl-CoA: step 1/1. Its function is as follows. Component of the acetyl coenzyme A carboxylase (ACC) complex. Biotin carboxylase (BC) catalyzes the carboxylation of biotin on its carrier protein (BCCP) and then the CO(2) group is transferred by the transcarboxylase to acetyl-CoA to form malonyl-CoA. This is Acetyl-coenzyme A carboxylase carboxyl transferase subunit beta from Listeria innocua serovar 6a (strain ATCC BAA-680 / CLIP 11262).